Reading from the N-terminus, the 267-residue chain is Actin maturation protease (267 aa).

The disordered stretch occupies residues 1-32 (MSNISSVAPPPPPPPMIVTPSTPATTKERPVG). Pro residues predominate over residues 8-17 (APPPPPPPMI). The interval 74–188 (SIVQVGPTCG…WALIVGYLVD (115 aa)) is peptidase C39-like. Residue cysteine 82 is part of the active site.

The protein belongs to the ACTMAP family.

It catalyses the reaction N-terminal N(alpha)-acetyl-L-cysteinyl-L-aspartyl-[protein] + H2O = N-terminal L-aspartyl-[protein] + N-acetyl-L-cysteine. Actin maturation protease that specifically mediates the cleavage of immature acetylated N-terminal actin, thereby contributing to actin maturation. This chain is Actin maturation protease, found in Drosophila melanogaster (Fruit fly).